Reading from the N-terminus, the 216-residue chain is MLASPARPTLRMLANHALSTPHCACSPAPAPRTASASRRRCVPVEARAAGVFGDRLAGVFGSRGLKHGGVQAPRPRVVRAEPRAGFAVVRSPRRLCGRSHAPQPPAHLGLGPGCFPAVAVVVPVPGSRAHRPFAALLVEGSFLGDPPIPPRRSGVLARGSAGADCLASSVTPGPSLWIPLLLVAGCVSCFVGLAVCVWMQARVSPAWPAGLFLLPR.

The chain crosses the membrane as a helical span at residues 177 to 197 (WIPLLLVAGCVSCFVGLAVCV).

Expressed only in testis.

The protein resides in the cytoplasm. The protein localises to the membrane. This Homo sapiens (Human) protein is Putative transmembrane protein RNF32-DT.